Here is a 93-residue protein sequence, read N- to C-terminus: Small ribosomal subunit protein bS16 (93 aa).

The protein belongs to the bacterial ribosomal protein bS16 family.

The polypeptide is Small ribosomal subunit protein bS16 (Dictyoglomus turgidum (strain DSM 6724 / Z-1310)).